Consider the following 283-residue polypeptide: Polyamine aminopropyltransferase (283 aa).

The 236-residue stretch at 2-237 (ELWYTEEHTD…GHWLFGFASK (236 aa)) folds into the PABS domain. Position 31 (Gln31) interacts with S-methyl-5'-thioadenosine. Spermidine is bound by residues His62 and Asp86. Residues Glu106 and 137–138 (DG) contribute to the S-methyl-5'-thioadenosine site. Asp155 (proton acceptor) is an active-site residue. 155 to 158 (DSTD) lines the spermidine pocket. S-methyl-5'-thioadenosine is bound at residue Pro162.

The protein belongs to the spermidine/spermine synthase family. In terms of assembly, homodimer or homotetramer.

The protein resides in the cytoplasm. The catalysed reaction is S-adenosyl 3-(methylsulfanyl)propylamine + putrescine = S-methyl-5'-thioadenosine + spermidine + H(+). It functions in the pathway amine and polyamine biosynthesis; spermidine biosynthesis; spermidine from putrescine: step 1/1. Functionally, catalyzes the irreversible transfer of a propylamine group from the amino donor S-adenosylmethioninamine (decarboxy-AdoMet) to putrescine (1,4-diaminobutane) to yield spermidine. This chain is Polyamine aminopropyltransferase, found in Clostridium perfringens (strain SM101 / Type A).